The chain runs to 613 residues: Pentatricopeptide repeat-containing protein At2g02750 (613 aa).

PPR repeat units follow at residues 30–64 (NKFT…GFFV), 65–99 (DVFT…GIAS), 101–126 (NAAV…ARVS), 128–162 (SGMN…GFEM), 163–193 (EVYV…VPHK), 194–228 (SVVT…SSEE), 230–264 (NDVT…EFQF), 265–295 (ETMV…LKDT), 297–331 (NLIS…GLKP), 332–366 (DSAT…VMVP), 367–401 (SLKC…AAER), 402–432 (DIFV…FEPK), 435–469 (DPVF…KVEP), 470–500 (SLAT…MQEE), and 506–539 (STEH…PSSS). A type E motif; degenerate region spans residues 540–613 (VYSSLLGSCR…VKLPGLSLSG (74 aa)).

The protein belongs to the PPR family. PCMP-E subfamily.

The protein is Pentatricopeptide repeat-containing protein At2g02750 (PCMP-E22) of Arabidopsis thaliana (Mouse-ear cress).